The chain runs to 238 residues: Small ribosomal subunit protein uS3 (238 aa).

Residues 39-109 (IRTFINQQLA…TIKVNVVEVN (71 aa)) form the KH type-2 domain. Residues 215–238 (EAVPREATRRSPQRRLPQFENRSN) are disordered.

It belongs to the universal ribosomal protein uS3 family. As to quaternary structure, part of the 30S ribosomal subunit. Forms a tight complex with proteins S10 and S14.

Its function is as follows. Binds the lower part of the 30S subunit head. Binds mRNA in the 70S ribosome, positioning it for translation. The polypeptide is Small ribosomal subunit protein uS3 (Thermosynechococcus vestitus (strain NIES-2133 / IAM M-273 / BP-1)).